A 408-amino-acid polypeptide reads, in one-letter code: Peptidase T (408 aa).

His78 contacts Zn(2+). Asp80 is an active-site residue. Asp140 lines the Zn(2+) pocket. Glu173 acts as the Proton acceptor in catalysis. 3 residues coordinate Zn(2+): Glu174, Asp196, and His379.

It belongs to the peptidase M20B family. Zn(2+) is required as a cofactor.

It is found in the cytoplasm. It carries out the reaction Release of the N-terminal residue from a tripeptide.. Functionally, cleaves the N-terminal amino acid of tripeptides. The protein is Peptidase T of Salmonella arizonae (strain ATCC BAA-731 / CDC346-86 / RSK2980).